Here is a 373-residue protein sequence, read N- to C-terminus: UDP-sugar transporter UST74c (373 aa).

The disordered stretch occupies residues 27-49 (LEEKMGGSADRSSLLDGSGSKEL). Ser50 is modified (phosphoserine). A run of 8 helical transmembrane segments spans residues 89 to 111 (HFPS…LGMG), 131 to 153 (FPLP…TLSL), 174 to 196 (ILGL…GALL), 206 to 225 (MRGY…NGVY), 238 to 260 (YGLM…YVTG), 275 to 297 (VFVV…TILC), 302 to 324 (SALT…GMFI), and 329 to 351 (VFSW…YTYV).

Belongs to the TPT transporter family. SLC35D subfamily.

Its subcellular location is the golgi apparatus membrane. Involved in the import of UDP-sugars from the cytoplasm into the Golgi lumen. This is UDP-sugar transporter UST74c (frc) from Drosophila melanogaster (Fruit fly).